A 797-amino-acid chain; its full sequence is Calcium-transporting ATPase CtpE (797 aa).

3 helical membrane passes run 55 to 75, 215 to 235, and 254 to 274; these read LLLIVLATGSLINGMFGLLII, ILQFITYLLVPAGLLTIYTQL, and VPMVPEGLVLMTSIAFAVGVV. Asp-301 serves as the catalytic 4-aspartylphosphate intermediate. 3 residues coordinate Mg(2+): Asp-301, Thr-303, and Asp-536. 6 consecutive transmembrane segments (helical) span residues 601–621, 633–653, 667–687, 703–723, 729–749, and 764–784; these read TVYSVLLALLVGIECLIAIPL, IHVTIAAWFTIGIPAFILSLA, VMTSAVPFGLVIGVATFVTYL, ASTAALITLLMTALWVLAVIA, WRLALVLASGLAYVVIFSLPL, and TSIALAVGVVGAATIEAMWWI.

It belongs to the cation transport ATPase (P-type) (TC 3.A.3) family.

Its subcellular location is the cell membrane. The catalysed reaction is Ca(2+)(in) + ATP + H2O = Ca(2+)(out) + ADP + phosphate + H(+). In terms of biological role, P-type ATPase involved in specific uptake of calcium. This Mycobacterium bovis (strain ATCC BAA-935 / AF2122/97) protein is Calcium-transporting ATPase CtpE (ctpE).